The primary structure comprises 298 residues: Protein FAM221A (298 aa).

A compositionally biased stretch (polar residues) spans 241-257 (SSPETLTDVGTSSQVSS). Residues 241–263 (SSPETLTDVGTSSQVSSLRRPEE) form a disordered region.

Belongs to the FAM221 family.

This is Protein FAM221A (FAM221A) from Homo sapiens (Human).